We begin with the raw amino-acid sequence, 231 residues long: MPPRKTRSSAKSNKHSDADAHLNEGSDDVAQRKTGKRKRSAAVKGDVENKNDDDACKPSYSRWLMKSEPESRIENGVDVKFGIEDLKALPNQTGCWDGVRNYQARNFMREMKVGQQAFFYHSNCKEPGIAGLMKIVKEAYVDHTQFDKKDVHYDPSSKADNPKWHMVDVQFERMVKRFIPLAELKKYHLEHRVKGGPLKDMALFTRARLSVQPLTAEEFEFVLSLENEDPI.

A disordered region spans residues 1–54 (MPPRKTRSSAKSNKHSDADAHLNEGSDDVAQRKTGKRKRSAAVKGDVENKNDDD). The short motif at 4 to 11 (RKTRSSAK) is the Nuclear localization signal element. 2 stretches are compositionally biased toward basic and acidic residues: residues 14–24 (KHSDADAHLNE) and 45–54 (GDVENKNDDD).

In terms of processing, phosphorylated.

The protein resides in the nucleus. In terms of biological role, specifically binds 5-hydroxymethylcytosine (5hmC), suggesting that it acts as a specific reader of 5hmC. This is Thymocyte nuclear protein 1 (thyn1) from Danio rerio (Zebrafish).